Consider the following 103-residue polypeptide: Trp operon repressor homolog (103 aa).

The DNA-binding element occupies 62–85; the sequence is QRKISELLGVGVATITRGSNELKH.

Belongs to the TrpR family. As to quaternary structure, homodimer.

Its subcellular location is the cytoplasm. This protein is an aporepressor. When complexed with L-tryptophan it binds the operator region of the trp operon and prevents the initiation of transcription. The polypeptide is Trp operon repressor homolog (Photobacterium profundum (strain SS9)).